A 337-amino-acid polypeptide reads, in one-letter code: Mating-type protein MAT-2 (337 aa).

The HMG box DNA-binding region spans 125-193 (APRPMNCWII…EHLRQHPNYK (69 aa)). Residues 171–219 (KRPWQDAAQSAKEEHLRQHPNYKYTPRKPGEKKKRQSRKSKRAAATTTA) are disordered. Residues 200–212 (GEKKKRQSRKSKR) are compositionally biased toward basic residues.

The protein resides in the nucleus. This is Mating-type protein MAT-2 (MAT2) from Cochliobolus sativus (Common root rot and spot blotch fungus).